A 394-amino-acid chain; its full sequence is Alcohol dehydrogenase-like 3 (394 aa).

Residues C48, T50, H71, C101, C104, C107, C115, and C188 each contribute to the Zn(2+) site. 2 residues coordinate an alcohol: T50 and H71. An NAD(+)-binding site is contributed by T50. NAD(+)-binding positions include 213–218 (GLGSVG), D237, K242, T283, V306, 306–308 (VGI), F333, and R383.

Belongs to the zinc-containing alcohol dehydrogenase family. Class-III subfamily. In terms of assembly, homodimer. The cofactor is Zn(2+).

The protein resides in the cytoplasm. It catalyses the reaction a primary alcohol + NAD(+) = an aldehyde + NADH + H(+). The enzyme catalyses a secondary alcohol + NAD(+) = a ketone + NADH + H(+). In Arabidopsis thaliana (Mouse-ear cress), this protein is Alcohol dehydrogenase-like 3.